We begin with the raw amino-acid sequence, 340 residues long: tRNA N6-adenosine threonylcarbamoyltransferase (340 aa).

Fe cation-binding residues include H111 and H115. Substrate contacts are provided by residues 134–138 (LVSGG), D167, G180, and N276. Residue D304 participates in Fe cation binding.

It belongs to the KAE1 / TsaD family. Fe(2+) serves as cofactor.

It localises to the cytoplasm. It carries out the reaction L-threonylcarbamoyladenylate + adenosine(37) in tRNA = N(6)-L-threonylcarbamoyladenosine(37) in tRNA + AMP + H(+). Required for the formation of a threonylcarbamoyl group on adenosine at position 37 (t(6)A37) in tRNAs that read codons beginning with adenine. Is involved in the transfer of the threonylcarbamoyl moiety of threonylcarbamoyl-AMP (TC-AMP) to the N6 group of A37, together with TsaE and TsaB. TsaD likely plays a direct catalytic role in this reaction. The polypeptide is tRNA N6-adenosine threonylcarbamoyltransferase (Helicobacter pylori (strain ATCC 700392 / 26695) (Campylobacter pylori)).